The sequence spans 240 residues: Protein unc-119 homolog A (240 aa).

Gly residues predominate over residues 1–12; it reads MKVKKGGGGAGT. A disordered region spans residues 1-61; that stretch reads MKVKKGGGGA…GPLQRKQRIG (61 aa). Residues 13-23 show a composition bias toward low complexity; sequence GAEPASGAPGP. A phosphoserine; by CK2 mark is found at Ser-37, Ser-39, and Ser-41. Tetradecanoate is bound at residue Tyr-131.

Belongs to the PDE6D/unc-119 family. Interacts with CABP4; in the absence of calcium. May interact with GTP-bound ARL1. Interacts with ARL2 and ARL3 (GTP-bound forms); this promotes the release of myristoylated cargo proteins. Found in a complex with ARL3, RP2 and UNC119; RP2 induces hydrolysis of GTP ARL3 in the complex, leading to the release of UNC119. Interacts with NPHP3 (when myristoylated). Interacts with CYS1 (when myristoylated). Interacts with MACIR; interaction only takes place when UNC119 is not liganded with myristoylated proteins. Interacts with LCK; this interaction plays a crucial role in activation of LCK. Interacts with FYN. Interacts with RAB11A; in a cell cycle-dependent manner. Interacts with LYN (via SH2 and SH3 domains); leading to LYN activation. Interacts with DNM1; leading to a decrease of DNM1 GTPase activity. Found in a complex with ABL1, ABL2, CRK and UNC119; leading to the inhibition of CRK phosphorylation by ABL kinases. Interacts with CD44. Interacts with KLHL18 (via kelch repeats). Interacts with PPP3CA, PPP3CB and PPP3CC. Interacts with USP48; this interaction promotes UNC119 stability. Phosphorylation suppresses its interaction with KLHL18 and down-regulates its KLHL18-mediated degradation. Phosphorylated more under light conditions than dark conditions. Dephosphorylated by calcineurin.

The protein localises to the cytoplasm. The protein resides in the cytoskeleton. It localises to the microtubule organizing center. Its subcellular location is the centrosome. It is found in the spindle. The protein localises to the spindle pole. Involved in synaptic functions in photoreceptor cells, the signal transduction in immune cells as a Src family kinase activator, endosome recycling, the uptake of bacteria and endocytosis, protein trafficking in sensory neurons and as lipid-binding chaperone with specificity for a diverse subset of myristoylated proteins. Specifically binds the myristoyl moiety of a subset of N-terminally myristoylated proteins and is required for their localization. Binds myristoylated GNAT1 and is required for G-protein localization and trafficking in sensory neurons. Probably plays a role in trafficking proteins in photoreceptor cells. Plays important roles in mediating Src family kinase signals for the completion of cytokinesis via RAB11A. The polypeptide is Protein unc-119 homolog A (UNC119) (Canis lupus familiaris (Dog)).